Consider the following 264-residue polypeptide: MDLLYRVKTLWAALRGNHYTWPAIDITLPGNRHFHLIGSIHMGSHDMAPLPTRLLKKLKNADALIVEADVSTSDTPFANLPACEALEERISEEQLQNLQHISQEMGISPSLFSTQPLWQIAMVLQATQAQKLGLRAEYGIDYQLLQAAKQQHKPVIELEGAENQIAMLLQLPDKGLALLDDTLTHWHTNARLLQQMMSWWLNAPPQNNDITLPNTFSQSLYDVLMHQRNLAWRDKLRAMPPGRYVVAVGALHLYGEGNLPQMLR.

This is an uncharacterized protein from Escherichia coli (strain K12).